The primary structure comprises 319 residues: Cutinase cut1 (319 aa).

Residues 1–58 (MPPHAARPGPAQNRRGRAMAVITPRRERSSLLSRALRFTAAAATALVTAVSLAAPAHA) form the signal peptide. Tyr-118 is a binding site for poly(ethylene terephthalate). Ser-188 acts as the Nucleophile in catalysis. Poly(ethylene terephthalate)-binding residues include Met-189 and Trp-213. Active-site charge relay system residues include Asp-234 and His-266. Cys-299 and Cys-317 are disulfide-bonded.

This sequence belongs to the AB hydrolase superfamily.

It is found in the secreted. Its subcellular location is the periplasm. The enzyme catalyses an acetyl ester + H2O = an aliphatic alcohol + acetate + H(+). It catalyses the reaction a butanoate ester + H2O = an aliphatic alcohol + butanoate + H(+). The catalysed reaction is pentanoate ester + H2O = pentanoate + an aliphatic alcohol + H(+). It carries out the reaction an octanoate ester + H2O = an aliphatic alcohol + octanoate + H(+). The enzyme catalyses decanoate ester + H2O = decanoate + an aliphatic alcohol + H(+). It catalyses the reaction a dodecanoate ester + H2O = an aliphatic alcohol + dodecanoate + H(+). The catalysed reaction is a tetradecanoate ester + H2O = an aliphatic alcohol + tetradecanoate + H(+). It carries out the reaction hexadecanoate ester + H2O = an aliphatic alcohol + hexadecanoate + H(+). The enzyme catalyses cutin + H2O = cutin monomers.. It catalyses the reaction (ethylene terephthalate)(n) + H2O = (ethylene terephthalate)(n-1) + 4-[(2-hydroxyethoxy)carbonyl]benzoate + H(+). Its activity is regulated as follows. Activated by magnesium ions. Activated by calcium ions. Its function is as follows. Catalyzes the hydrolysis of cutin, a polyester that forms the structure of plant cuticle. Shows esterase activity towards p-nitrophenol-linked aliphatic esters (pNP-aliphatic esters). Capable of degrading the plastic poly(ethylene terephthalate) (PET), the most abundant polyester plastic in the world. This Thermobifida fusca (Thermomonospora fusca) protein is Cutinase cut1.